Reading from the N-terminus, the 367-residue chain is Membrane-bound lytic murein transglycosylase C (367 aa).

Residues 1–19 form the signal peptide; sequence MRKYAKYLPFCLVVPFLAA. Cys20 is lipidated: N-palmitoyl cysteine. Cys20 carries S-diacylglycerol cysteine lipidation.

This sequence belongs to the transglycosylase Slt family.

Its subcellular location is the cell outer membrane. It carries out the reaction Exolytic cleavage of the (1-&gt;4)-beta-glycosidic linkage between N-acetylmuramic acid (MurNAc) and N-acetylglucosamine (GlcNAc) residues in peptidoglycan, from either the reducing or the non-reducing ends of the peptidoglycan chains, with concomitant formation of a 1,6-anhydrobond in the MurNAc residue.. Its function is as follows. Murein-degrading enzyme. May play a role in recycling of muropeptides during cell elongation and/or cell division. This Haemophilus ducreyi (strain 35000HP / ATCC 700724) protein is Membrane-bound lytic murein transglycosylase C.